A 167-amino-acid chain; its full sequence is General odorant-binding protein 1 (167 aa).

A signal peptide spans 1–22 (MAHTLQTVVLLLGTSILHPILA). 3 disulfide bridges follow: C41–C76, C72–C130, and C119–C139.

It belongs to the PBP/GOBP family. As to expression, antenna.

Functionally, present in the aqueous fluid surrounding olfactory sensory dendrites and are thought to aid in the capture and transport of hydrophobic odorants into and through this fluid. This chain is General odorant-binding protein 1, found in Antheraea pernyi (Chinese oak silk moth).